A 372-amino-acid polypeptide reads, in one-letter code: Lung adenoma susceptibility protein 2 (372 aa).

Residues 1 to 31 (MAKSKTKHRLCSQESSVSALLASCTLSGSNS) form the signal peptide. Position 161 is a phosphoserine (Ser161). Residues 248–268 (KSPVPVNSDDSPQQTSRAKSA) form a disordered region. The segment covering 255–265 (SDDSPQQTSRA) has biased composition (polar residues).

The protein resides in the secreted. In terms of biological role, might play a role in cell proliferation. The protein is Lung adenoma susceptibility protein 2 (LAS2) of Homo sapiens (Human).